We begin with the raw amino-acid sequence, 217 residues long: MLHSYFTVKEAGEHEIVIEKSRFICHLSRVSTEQEAQEFIQKIKKQHWNATHNCSAYVIGENDHIQKANDDGEPSGTAGVPMLEVLKKRRLKDTCAVVTRYFGGIKLGAGGLIRAYGKSVSEGLNHIGVVERKLMRIMHTSADYTWLGKIENELRESQFLLKEIHYSENVEFETYVEEKETNAFSEWMTELTNGKSDIKEGELTYLEKAVNHIKETE.

Belongs to the IMPACT family.

The chain is IMPACT family member YvyE (yvyE) from Bacillus subtilis (strain 168).